Consider the following 505-residue polypeptide: Maturase K (505 aa).

It belongs to the intron maturase 2 family. MatK subfamily.

The protein resides in the plastid. It is found in the chloroplast. Usually encoded in the trnK tRNA gene intron. Probably assists in splicing its own and other chloroplast group II introns. This is Maturase K from Nuphar advena (Common spatterdock).